Here is a 361-residue protein sequence, read N- to C-terminus: Chorismate synthase (361 aa).

2 residues coordinate NADP(+): Arg-48 and Arg-54. FMN contacts are provided by residues 125 to 127 (RSS), 238 to 239 (NA), Gly-278, 293 to 297 (KPTSS), and Arg-319.

This sequence belongs to the chorismate synthase family. Homotetramer. Requires FMNH2 as cofactor.

The enzyme catalyses 5-O-(1-carboxyvinyl)-3-phosphoshikimate = chorismate + phosphate. It functions in the pathway metabolic intermediate biosynthesis; chorismate biosynthesis; chorismate from D-erythrose 4-phosphate and phosphoenolpyruvate: step 7/7. Functionally, catalyzes the anti-1,4-elimination of the C-3 phosphate and the C-6 proR hydrogen from 5-enolpyruvylshikimate-3-phosphate (EPSP) to yield chorismate, which is the branch point compound that serves as the starting substrate for the three terminal pathways of aromatic amino acid biosynthesis. This reaction introduces a second double bond into the aromatic ring system. This Cronobacter sakazakii (strain ATCC BAA-894) (Enterobacter sakazakii) protein is Chorismate synthase.